The sequence spans 183 residues: Peptidyl-tRNA hydrolase (183 aa).

Tyr14 contacts tRNA. Catalysis depends on His19, which acts as the Proton acceptor. TRNA is bound by residues Tyr64, Asn66, and Asn112.

It belongs to the PTH family. In terms of assembly, monomer.

It is found in the cytoplasm. It catalyses the reaction an N-acyl-L-alpha-aminoacyl-tRNA + H2O = an N-acyl-L-amino acid + a tRNA + H(+). Hydrolyzes ribosome-free peptidyl-tRNAs (with 1 or more amino acids incorporated), which drop off the ribosome during protein synthesis, or as a result of ribosome stalling. Its function is as follows. Catalyzes the release of premature peptidyl moieties from peptidyl-tRNA molecules trapped in stalled 50S ribosomal subunits, and thus maintains levels of free tRNAs and 50S ribosomes. This Anaplasma phagocytophilum (strain HZ) protein is Peptidyl-tRNA hydrolase.